Consider the following 244-residue polypeptide: tRNA (guanine-N(1)-)-methyltransferase (244 aa).

S-adenosyl-L-methionine is bound by residues Gly114 and 134 to 139 (IGDYVL). The segment at 220–244 (RRPDLLEKAGASPGKSGSNFGKHDA) is disordered.

It belongs to the RNA methyltransferase TrmD family. In terms of assembly, homodimer.

The protein localises to the cytoplasm. It catalyses the reaction guanosine(37) in tRNA + S-adenosyl-L-methionine = N(1)-methylguanosine(37) in tRNA + S-adenosyl-L-homocysteine + H(+). Functionally, specifically methylates guanosine-37 in various tRNAs. This chain is tRNA (guanine-N(1)-)-methyltransferase, found in Rhizobium johnstonii (strain DSM 114642 / LMG 32736 / 3841) (Rhizobium leguminosarum bv. viciae).